Here is a 162-residue protein sequence, read N- to C-terminus: Cytochrome c-type biogenesis protein CcmE (162 aa).

At 1–8 (MNPVRKKR) the chain is on the cytoplasmic side. Residues 9 to 29 (LIIVLAILVGVGAAVGLALSA) traverse the membrane as a helical; Signal-anchor for type II membrane protein segment. Residues 30–162 (LQQNINLFYT…GETSYNQEGK (133 aa)) are Periplasmic-facing. Positions 124 and 128 each coordinate heme. Basic and acidic residues predominate over residues 139 to 148 (DSGQLKHYEN). The interval 139–162 (DSGQLKHYENGKAAGETSYNQEGK) is disordered.

It belongs to the CcmE/CycJ family.

Its subcellular location is the cell inner membrane. Heme chaperone required for the biogenesis of c-type cytochromes. Transiently binds heme delivered by CcmC and transfers the heme to apo-cytochromes in a process facilitated by CcmF and CcmH. The polypeptide is Cytochrome c-type biogenesis protein CcmE (Pseudomonas paraeruginosa (strain DSM 24068 / PA7) (Pseudomonas aeruginosa (strain PA7))).